A 275-amino-acid chain; its full sequence is Ribosomal RNA small subunit methyltransferase A (275 aa).

Residues Asn19, Leu21, Gly46, Glu71, Asp94, and Asn117 each contribute to the S-adenosyl-L-methionine site.

It belongs to the class I-like SAM-binding methyltransferase superfamily. rRNA adenine N(6)-methyltransferase family. RsmA subfamily.

It localises to the cytoplasm. The enzyme catalyses adenosine(1518)/adenosine(1519) in 16S rRNA + 4 S-adenosyl-L-methionine = N(6)-dimethyladenosine(1518)/N(6)-dimethyladenosine(1519) in 16S rRNA + 4 S-adenosyl-L-homocysteine + 4 H(+). Its function is as follows. Specifically dimethylates two adjacent adenosines (A1518 and A1519) in the loop of a conserved hairpin near the 3'-end of 16S rRNA in the 30S particle. May play a critical role in biogenesis of 30S subunits. The chain is Ribosomal RNA small subunit methyltransferase A from Burkholderia pseudomallei (strain 668).